A 107-amino-acid polypeptide reads, in one-letter code: Putative double-stranded DNA mimic protein CGSHiGG_01135 (107 aa).

Belongs to the putative dsDNA mimic protein family.

Functionally, may act as a double-stranded DNA (dsDNA) mimic. Probably regulates the activity of a dsDNA-binding protein. In Haemophilus influenzae (strain PittGG), this protein is Putative double-stranded DNA mimic protein CGSHiGG_01135.